A 188-amino-acid polypeptide reads, in one-letter code: Glutamyl endopeptidase 2 (188 aa).

C14 and C34 are disulfide-bonded. Catalysis depends on charge relay system residues H33, D62, and S143. Cysteines 137 and 163 form a disulfide.

Belongs to the peptidase S1 family. In terms of assembly, monomer.

It catalyses the reaction Preferential cleavage: -Glu-|-Xaa- &gt;&gt; -Asp-|-Xaa-. Preference for Pro or Leu at P2 and Phe at P3. Cleavage of -Glu-|-Asp- and -Glu-|-Pro- bonds is slow.. Functionally, preferentially cleaves peptide bonds on the carboxyl-terminal side of glutamate. The polypeptide is Glutamyl endopeptidase 2 (sprE) (Streptomyces griseus).